Reading from the N-terminus, the 433-residue chain is ATP-sensitive inward rectifier potassium channel 12 (433 aa).

Topologically, residues 1-77 (MTAASRANPY…LADMFTTCVD (77 aa)) are cytoplasmic. At C75 the chain carries S-nitrosocysteine. The helical transmembrane segment at 78–104 (IRWRYMLLIFSLAFLASWLLFGIIFWV) threads the bilayer. Residues R79 and R81 each contribute to the a 1,2-diacyl-sn-glycero-3-phospho-(1D-myo-inositol-4,5-bisphosphate) site. Residues 105–129 (IAVAHGDLEPAEGRGRTPCVMQVHG) are Extracellular-facing. The cysteines at positions 123 and 155 are disulfide-linked. The helical; Pore-forming intramembrane region spans 130–146 (FMAAFLFSIETQTTIGY). K(+) is bound by residues T143, I144, G145, and Y146. Positions 143–148 (TIGYGL) match the Selectivity filter motif. Residues 147 to 155 (GLRCVTEEC) lie on the Extracellular side of the membrane. A helical transmembrane segment spans residues 156 to 183 (PVAVFMVVAQSIVGCIIDSFMIGAIMAK). Residues K183 and K188 each coordinate a 1,2-diacyl-sn-glycero-3-phospho-(1D-myo-inositol-4,5-bisphosphate). Residues 184 to 433 (MARPKKRAQT…QRPYRRESEI (250 aa)) are Cytoplasmic-facing. The tract at residues 387-433 (DEEDEADGDQDGRSRDGLSPQARHDFDRLQAGGGVLEQRPYRRESEI) is disordered. The segment covering 396–414 (QDGRSRDGLSPQARHDFDR) has biased composition (basic and acidic residues). The PDZ-binding motif lies at 431-433 (SEI).

It belongs to the inward rectifier-type potassium channel (TC 1.A.2.1) family. KCNJ12 subfamily. In terms of assembly, homotetramer. Forms heteromer with KCNJ4. Can form heteromeric channels with Kir2.6/KCNJ18. Association, via its PDZ-recognition domain, with LIN7A, LIN7B, LIN7C, DLG1, CASK and APBA1 plays a key role in its localization and trafficking.

It is found in the membrane. Its subcellular location is the cell membrane. It localises to the sarcolemma. The protein resides in the T-tubule. The catalysed reaction is K(+)(in) = K(+)(out). With respect to regulation, activated by phosphatidylinositol 4,5-biphosphate (PtdIns(4,5)P2). PtdIns(4,5)P2 binding to the cytoplasmic side of the channel triggers a conformation change leading to channel opening. Inhibited by Ba(2+). Its function is as follows. Inward rectifying potassium channel that probably participates in controlling the resting membrane potential in electrically excitable cells. Probably participates in establishing action potential waveform and excitability of neuronal and muscle tissues. Inward rectifier potassium channels are characterized by a greater tendency to allow potassium to flow into the cell rather than out of it. Their voltage dependence is regulated by the concentration of extracellular potassium; as external potassium is raised, the voltage range of the channel opening shifts to more positive voltages. The inward rectification is mainly due to the blockage of outward current by internal magnesium. The sequence is that of ATP-sensitive inward rectifier potassium channel 12 (KCNJ12) from Homo sapiens (Human).